Here is a 431-residue protein sequence, read N- to C-terminus: Divalent metal cation transporter MntH (431 aa).

The next 11 membrane-spanning stretches (helical) occupy residues 33–53 (LLKFLGPAFVVSVAYIDPGNF), 61–81 (SSFNYNLIWVILWSNLMAIFL), 110–130 (WIFWIVGELGAMATDLAEFIG), 141–161 (IPMIYAGLLTGVLTFIIVYME), 170–190 (TIIAALIAVICVAYTIELFLA), 211–231 (AVLIAVGMLGATVMPHVIYLH), 258–278 (ILIAMNIAFVVNAAMVIVSAA), 307–327 (GAFGIALLASGLSSSAVGTMA), 347–367 (IITMLPALIIIALGINPMRVL), 368–388 (VLSQVALSFILPFPIIQMLLI), and 406–426 (IVGFIIATMIILLNIILLYLT).

The protein belongs to the NRAMP family.

The protein localises to the cell membrane. Its function is as follows. H(+)-stimulated, divalent metal cation uptake system. The sequence is that of Divalent metal cation transporter MntH from Clostridium acetobutylicum (strain ATCC 824 / DSM 792 / JCM 1419 / IAM 19013 / LMG 5710 / NBRC 13948 / NRRL B-527 / VKM B-1787 / 2291 / W).